The sequence spans 244 residues: Capsid protein (244 aa).

Positions 1–24 (MSTSKRKRADEAQWNKRSTKKKGS) match the Bipartite nuclear localization signal motif. Residues 1–39 (MSTSKRKRADEAQWNKRSTKKKGSAPQAKKPGGKVEKPS) are disordered.

It belongs to the geminiviridae capsid protein family. Homomultimer. Interacts with the movement protein. Binds to single-stranded and double-stranded viral DNA.

Its subcellular location is the virion. It is found in the host nucleus. Functionally, encapsidates the viral genome into characteristic twinned ('geminate') particles. Binds the genomic viral ssDNA and shuttles it into and out of the cell nucleus. Plays a role in protection of the genome from degradation, virus acquisition and transmission by insect vectors, infectivity, and systemic movement. The CP of monopartite geminiviruses is absolutely essential for virus movement. The chain is Capsid protein from Avena sativa (Oat).